Consider the following 323-residue polypeptide: Phospho-N-acetylmuramoyl-pentapeptide-transferase (323 aa).

Transmembrane regions (helical) follow at residues 5–25 (SAVLTILSSFLITFLLMPSLI), 57–77 (LLFIFSAVVTILWVAAWQGLI), 81–101 (LWALLFVLVVYGLIGMWDDSI), 118–138 (LCQVLAAMVFTVIYQHEGFQM), 140–160 (FGTTQIGWLYGLFIIFWIVGF), 173–193 (LVSGLSIISFAAYLIIALVNL), 196–216 (PGYPEIALFCLAMIGTLLGFF), 225–247 (IFMGDMGSLAIGASLAAVSLLLH), and 302–322 (IVFWLVGLVAAIIAVTTILLV).

It belongs to the glycosyltransferase 4 family. MraY subfamily. Mg(2+) serves as cofactor.

It localises to the cell membrane. It catalyses the reaction UDP-N-acetyl-alpha-D-muramoyl-L-alanyl-gamma-D-glutamyl-L-lysyl-D-alanyl-D-alanine + di-trans,octa-cis-undecaprenyl phosphate = Mur2Ac(oyl-L-Ala-gamma-D-Glu-L-Lys-D-Ala-D-Ala)-di-trans,octa-cis-undecaprenyl diphosphate + UMP. It participates in cell wall biogenesis; peptidoglycan biosynthesis. Its function is as follows. Catalyzes the initial step of the lipid cycle reactions in the biosynthesis of the cell wall peptidoglycan: transfers peptidoglycan precursor phospho-MurNAc-pentapeptide from UDP-MurNAc-pentapeptide onto the lipid carrier undecaprenyl phosphate, yielding undecaprenyl-pyrophosphoryl-MurNAc-pentapeptide, known as lipid I. The chain is Phospho-N-acetylmuramoyl-pentapeptide-transferase from Limosilactobacillus reuteri (strain DSM 20016) (Lactobacillus reuteri).